The primary structure comprises 59 residues: UPF0509 protein YciZ (59 aa).

It belongs to the UPF0509 family.

The chain is UPF0509 protein YciZ from Salmonella agona (strain SL483).